Here is a 171-residue protein sequence, read N- to C-terminus: MKVTVFHANECDRKKCTSIKMEKLGKCKLVYNINKIPSGAVVLNPFAQKAVSYEDYRYVHRRGVVGLDCSWNEVSSSKKFFSLSKYHRSLPFLIATNPVNYGKPCILSTVEAVSATLYITRFKDEAKDILDGFKWGHTFLELNHDLLEAYSEADTSKDVVRVQNEFLESKE.

S-adenosyl-L-methionine contacts are provided by Thr-17, Leu-67, Leu-90, and Thr-109.

Belongs to the TDD superfamily. TSR3 family.

It is found in the cytoplasm. It catalyses the reaction an N(1)-methylpseudouridine in rRNA + S-adenosyl-L-methionine = N(1)-methyl-N(3)-[(3S)-3-amino-3-carboxypropyl]pseudouridine in rRNA + S-methyl-5'-thioadenosine + H(+). In terms of biological role, aminocarboxypropyltransferase that catalyzes the aminocarboxypropyl transfer on pseudouridine corresponding to position 914 in M.jannaschii 16S rRNA. It constitutes the last step in biosynthesis of the hypermodified N1-methyl-N3-(3-amino-3-carboxypropyl) pseudouridine (m1acp3-Psi). This chain is 16S rRNA aminocarboxypropyltransferase, found in Methanobrevibacter smithii (strain ATCC 35061 / DSM 861 / OCM 144 / PS).